Consider the following 281-residue polypeptide: MFKRKKYVDNPYPKFVQPKNHKKRPAFIRYAMRCAAQTDVARNELYYTNPLKNPITGCVLHRKRRLNEHRARALRAVVQAMLYYFNIASMLVMASVEKLSDVCGLSTYSSAGNKSITRASRLITQFMEPMGLISCEKIWDKILGMYIPKIIYLKPLFFMLFDISKIRLKRVRIKQLEWINSQLKKKGEYPITLLEIEKQAKEKHIHSALLFRKSKYIIKKQKNKAKKFLELDEKYAKSYILNNLVKKYSTKELCKLGLTKLKRKVNCEYFRLKKLAQLPVV.

The protein belongs to the IncFII RepA family.

Functionally, this protein is essential for plasmid replication; it is involved in copy control functions. In Buchnera aphidicola subsp. Cinara cedri (strain Cc), this protein is Probable replication-associated protein repA1 (repA1).